A 359-amino-acid polypeptide reads, in one-letter code: Histidinol-phosphate aminotransferase (359 aa).

Lys-217 is modified (N6-(pyridoxal phosphate)lysine).

Belongs to the class-II pyridoxal-phosphate-dependent aminotransferase family. Histidinol-phosphate aminotransferase subfamily. Homodimer. The cofactor is pyridoxal 5'-phosphate.

The catalysed reaction is L-histidinol phosphate + 2-oxoglutarate = 3-(imidazol-4-yl)-2-oxopropyl phosphate + L-glutamate. It participates in amino-acid biosynthesis; L-histidine biosynthesis; L-histidine from 5-phospho-alpha-D-ribose 1-diphosphate: step 7/9. In Salmonella typhi, this protein is Histidinol-phosphate aminotransferase.